Reading from the N-terminus, the 218-residue chain is Small ribosomal subunit protein uS3 (218 aa).

The region spanning 38 to 106 (IREYINKRLQ…RVHINIVEIK (69 aa)) is the KH type-2 domain.

It belongs to the universal ribosomal protein uS3 family. As to quaternary structure, part of the 30S ribosomal subunit. Forms a tight complex with proteins S10 and S14.

In terms of biological role, binds the lower part of the 30S subunit head. Binds mRNA in the 70S ribosome, positioning it for translation. The polypeptide is Small ribosomal subunit protein uS3 (Geobacillus sp. (strain WCH70)).